A 311-amino-acid chain; its full sequence is Aspartate carbamoyltransferase catalytic subunit (311 aa).

2 residues coordinate carbamoyl phosphate: arginine 55 and threonine 56. Position 85 (lysine 85) interacts with L-aspartate. Carbamoyl phosphate is bound by residues arginine 106, histidine 135, and glutamine 138. 2 residues coordinate L-aspartate: arginine 168 and arginine 230. Residues leucine 268 and proline 269 each contribute to the carbamoyl phosphate site.

It belongs to the aspartate/ornithine carbamoyltransferase superfamily. ATCase family. In terms of assembly, heterododecamer (2C3:3R2) of six catalytic PyrB chains organized as two trimers (C3), and six regulatory PyrI chains organized as three dimers (R2).

The catalysed reaction is carbamoyl phosphate + L-aspartate = N-carbamoyl-L-aspartate + phosphate + H(+). Its pathway is pyrimidine metabolism; UMP biosynthesis via de novo pathway; (S)-dihydroorotate from bicarbonate: step 2/3. Functionally, catalyzes the condensation of carbamoyl phosphate and aspartate to form carbamoyl aspartate and inorganic phosphate, the committed step in the de novo pyrimidine nucleotide biosynthesis pathway. The polypeptide is Aspartate carbamoyltransferase catalytic subunit (Salmonella arizonae (strain ATCC BAA-731 / CDC346-86 / RSK2980)).